The sequence spans 788 residues: Protein translocase subunit SecA (788 aa).

ATP is bound by residues Gln-85, 103–107, and Asp-494; that span reads GEGKT.

The protein belongs to the SecA family. In terms of assembly, monomer and homodimer. Part of the essential Sec protein translocation apparatus which comprises SecA, SecYEG and auxiliary proteins SecDF. Other proteins may also be involved.

The protein localises to the cell membrane. The protein resides in the cytoplasm. The enzyme catalyses ATP + H2O + cellular proteinSide 1 = ADP + phosphate + cellular proteinSide 2.. Functionally, part of the Sec protein translocase complex. Interacts with the SecYEG preprotein conducting channel. Has a central role in coupling the hydrolysis of ATP to the transfer of proteins into and across the cell membrane, serving as an ATP-driven molecular motor driving the stepwise translocation of polypeptide chains across the membrane. In Oenococcus oeni (strain ATCC BAA-331 / PSU-1), this protein is Protein translocase subunit SecA.